Consider the following 113-residue polypeptide: Iron-sulfur cluster assembly protein CyaY (113 aa).

The protein belongs to the frataxin family.

Involved in iron-sulfur (Fe-S) cluster assembly. May act as a regulator of Fe-S biogenesis. The polypeptide is Iron-sulfur cluster assembly protein CyaY (Ralstonia nicotianae (strain ATCC BAA-1114 / GMI1000) (Ralstonia solanacearum)).